Here is a 409-residue protein sequence, read N- to C-terminus: Multifunctional CCA protein (409 aa).

The ATP site is built by Gly8 and Arg11. 2 residues coordinate CTP: Gly8 and Arg11. Residues Asp21 and Asp23 each contribute to the Mg(2+) site. Residues Arg91, Arg137, and Arg140 each contribute to the ATP site. CTP contacts are provided by Arg91, Arg137, and Arg140. The HD domain maps to 228 to 329; the sequence is TGVHTLSVLE…LELLQSFDVY (102 aa).

The protein belongs to the tRNA nucleotidyltransferase/poly(A) polymerase family. Bacterial CCA-adding enzyme type 1 subfamily. As to quaternary structure, monomer. Can also form homodimers and oligomers. The cofactor is Mg(2+). Requires Ni(2+) as cofactor.

The enzyme catalyses a tRNA precursor + 2 CTP + ATP = a tRNA with a 3' CCA end + 3 diphosphate. It carries out the reaction a tRNA with a 3' CCA end + 2 CTP + ATP = a tRNA with a 3' CCACCA end + 3 diphosphate. Catalyzes the addition and repair of the essential 3'-terminal CCA sequence in tRNAs without using a nucleic acid template. Adds these three nucleotides in the order of C, C, and A to the tRNA nucleotide-73, using CTP and ATP as substrates and producing inorganic pyrophosphate. tRNA 3'-terminal CCA addition is required both for tRNA processing and repair. Also involved in tRNA surveillance by mediating tandem CCA addition to generate a CCACCA at the 3' terminus of unstable tRNAs. While stable tRNAs receive only 3'-terminal CCA, unstable tRNAs are marked with CCACCA and rapidly degraded. This is Multifunctional CCA protein from Pseudomonas fluorescens (strain SBW25).